Here is an 817-residue protein sequence, read N- to C-terminus: Probable inorganic carbon transporter subunit DabA (817 aa).

The Zn(2+) site is built by C301, D303, H491, and C506. Disordered stretches follow at residues N598 to A617 and G794 to S817.

Belongs to the inorganic carbon transporter (TC 9.A.2) DabA family. In terms of assembly, forms a complex with DabB. The cofactor is Zn(2+).

It is found in the cell inner membrane. Functionally, part of an energy-coupled inorganic carbon pump. This chain is Probable inorganic carbon transporter subunit DabA, found in Salinibacter ruber (strain DSM 13855 / M31).